The following is a 227-amino-acid chain: Cytochrome c oxidase subunit 2 (227 aa).

Residues 1–14 (MAYPMQLGFQDATS) lie on the Mitochondrial intermembrane side of the membrane. Residues 15–45 (PIMEELLHFHDHTLMIVLLISSLVLYIISLM) form a helical membrane-spanning segment. The Mitochondrial matrix segment spans residues 46–59 (LTTKLTHTSTMDAQ). The helical transmembrane segment at 60–87 (EVETIWTILPAIILILIALPSLRILYMM) threads the bilayer. Residues 88-227 (DEINNPSLTV…YFEKWSASML (140 aa)) lie on the Mitochondrial intermembrane side of the membrane. Cu cation-binding residues include His161, Cys196, Glu198, Cys200, His204, and Met207. A Mg(2+)-binding site is contributed by Glu198. Tyr218 carries the phosphotyrosine modification.

Belongs to the cytochrome c oxidase subunit 2 family. In terms of assembly, component of the cytochrome c oxidase (complex IV, CIV), a multisubunit enzyme composed of 14 subunits. The complex is composed of a catalytic core of 3 subunits MT-CO1, MT-CO2 and MT-CO3, encoded in the mitochondrial DNA, and 11 supernumerary subunits COX4I, COX5A, COX5B, COX6A, COX6B, COX6C, COX7A, COX7B, COX7C, COX8 and NDUFA4, which are encoded in the nuclear genome. The complex exists as a monomer or a dimer and forms supercomplexes (SCs) in the inner mitochondrial membrane with NADH-ubiquinone oxidoreductase (complex I, CI) and ubiquinol-cytochrome c oxidoreductase (cytochrome b-c1 complex, complex III, CIII), resulting in different assemblies (supercomplex SCI(1)III(2)IV(1) and megacomplex MCI(2)III(2)IV(2)). Found in a complex with TMEM177, COA6, COX18, COX20, SCO1 and SCO2. Interacts with TMEM177 in a COX20-dependent manner. Interacts with COX20. Interacts with COX16. Requires Cu cation as cofactor.

The protein localises to the mitochondrion inner membrane. The catalysed reaction is 4 Fe(II)-[cytochrome c] + O2 + 8 H(+)(in) = 4 Fe(III)-[cytochrome c] + 2 H2O + 4 H(+)(out). Its function is as follows. Component of the cytochrome c oxidase, the last enzyme in the mitochondrial electron transport chain which drives oxidative phosphorylation. The respiratory chain contains 3 multisubunit complexes succinate dehydrogenase (complex II, CII), ubiquinol-cytochrome c oxidoreductase (cytochrome b-c1 complex, complex III, CIII) and cytochrome c oxidase (complex IV, CIV), that cooperate to transfer electrons derived from NADH and succinate to molecular oxygen, creating an electrochemical gradient over the inner membrane that drives transmembrane transport and the ATP synthase. Cytochrome c oxidase is the component of the respiratory chain that catalyzes the reduction of oxygen to water. Electrons originating from reduced cytochrome c in the intermembrane space (IMS) are transferred via the dinuclear copper A center (CU(A)) of subunit 2 and heme A of subunit 1 to the active site in subunit 1, a binuclear center (BNC) formed by heme A3 and copper B (CU(B)). The BNC reduces molecular oxygen to 2 water molecules using 4 electrons from cytochrome c in the IMS and 4 protons from the mitochondrial matrix. The chain is Cytochrome c oxidase subunit 2 (MT-CO2) from Bubalus depressicornis (Lowland anoa).